Consider the following 152-residue polypeptide: Large ribosomal subunit protein uL15 (152 aa).

The segment at 1-55 (MRLHELKPNEGATHKKKRVGRGIGSGHGKTSTKGQKGQTSRSGDSKLPARFEGGQ) is disordered. The span at 28 to 42 (GKTSTKGQKGQTSRS) shows a compositional bias: polar residues.

Belongs to the universal ribosomal protein uL15 family. As to quaternary structure, part of the 50S ribosomal subunit.

Functionally, binds to the 23S rRNA. The protein is Large ribosomal subunit protein uL15 of Sulfurihydrogenibium sp. (strain YO3AOP1).